Consider the following 476-residue polypeptide: Aspartyl/glutamyl-tRNA(Asn/Gln) amidotransferase subunit B (476 aa).

Belongs to the GatB/GatE family. GatB subfamily. In terms of assembly, heterotrimer of A, B and C subunits.

The enzyme catalyses L-glutamyl-tRNA(Gln) + L-glutamine + ATP + H2O = L-glutaminyl-tRNA(Gln) + L-glutamate + ADP + phosphate + H(+). It carries out the reaction L-aspartyl-tRNA(Asn) + L-glutamine + ATP + H2O = L-asparaginyl-tRNA(Asn) + L-glutamate + ADP + phosphate + 2 H(+). In terms of biological role, allows the formation of correctly charged Asn-tRNA(Asn) or Gln-tRNA(Gln) through the transamidation of misacylated Asp-tRNA(Asn) or Glu-tRNA(Gln) in organisms which lack either or both of asparaginyl-tRNA or glutaminyl-tRNA synthetases. The reaction takes place in the presence of glutamine and ATP through an activated phospho-Asp-tRNA(Asn) or phospho-Glu-tRNA(Gln). In Clostridium kluyveri (strain ATCC 8527 / DSM 555 / NBRC 12016 / NCIMB 10680 / K1), this protein is Aspartyl/glutamyl-tRNA(Asn/Gln) amidotransferase subunit B.